A 104-amino-acid chain; its full sequence is Protein S100-A14 (104 aa).

Residues 27-61 enclose the EF-hand domain; that stretch reads KNFHQYSVEGGKETLTPSELRDLVTQQLPHLMPSN.

The protein belongs to the S-100 family. As to quaternary structure, homodimer. Interacts with AGER.

Its subcellular location is the cytoplasm. Modulates P53/TP53 protein levels, and thereby plays a role in the regulation of cell survival and apoptosis. Depending on the context, it can promote cell proliferation or apoptosis. Plays a role in the regulation of cell migration by modulating the levels of MMP2, a matrix protease that is under transcriptional control of P53/TP53. Does not bind calcium. The polypeptide is Protein S100-A14 (S100A14) (Bos taurus (Bovine)).